An 87-amino-acid chain; its full sequence is Kappa-bungarotoxin (87 aa).

Positions 1 to 21 (MKTLLLTLVVVTIVCLDLGYT) are cleaved as a signal peptide. 5 disulfides stabilise this stretch: C24–C42, C35–C63, C48–C52, C67–C79, and C80–C85.

The protein belongs to the three-finger toxin family. Long-chain subfamily. Kappa-neurotoxin sub-subfamily. In terms of assembly, homodimer and heterodimer; non-covalently linked. In terms of tissue distribution, expressed by the venom gland.

It is found in the secreted. Its function is as follows. Postsynaptic neurotoxin that binds and inhibits neuronal nicotinic acetylcholine receptors (nAChR) with high affinity (IC(50)&lt;100 nM). Is a selective, and slowly reversible antagonist of alpha-3/CHRNA3-containing and some alpha-4/CHRNA4-containing AChRs. In Bungarus multicinctus (Many-banded krait), this protein is Kappa-bungarotoxin.